A 647-amino-acid polypeptide reads, in one-letter code: Threonine--tRNA ligase (647 aa).

Residues 1–61 (MINITFPDGA…TEDGSIEIVT (61 aa)) form the TGS domain. Residues 242 to 540 (DHRKLGKELD…LIENYKGAFP (299 aa)) are catalytic. Residues Cys336, His387, and His517 each contribute to the Zn(2+) site.

It belongs to the class-II aminoacyl-tRNA synthetase family. As to quaternary structure, homodimer. Requires Zn(2+) as cofactor.

The protein resides in the cytoplasm. The catalysed reaction is tRNA(Thr) + L-threonine + ATP = L-threonyl-tRNA(Thr) + AMP + diphosphate + H(+). Catalyzes the attachment of threonine to tRNA(Thr) in a two-step reaction: L-threonine is first activated by ATP to form Thr-AMP and then transferred to the acceptor end of tRNA(Thr). Also edits incorrectly charged L-seryl-tRNA(Thr). The chain is Threonine--tRNA ligase from Streptococcus pneumoniae serotype 19F (strain G54).